The primary structure comprises 317 residues: Tenomodulin (317 aa).

Residues 1-30 are Cytoplasmic-facing; it reads MAKNPPENCEGCHILNAEALKSKKICKSLK. Residues 31–50 traverse the membrane as a helical; Signal-anchor for type II membrane protein segment; the sequence is ICGLVFGILALTLIVLFWGS. Topologically, residues 51-317 are extracellular; it reads KHFWPEVSKK…WWVARMLGRV (267 aa). One can recognise a BRICHOS domain in the interval 93–186; sequence GNGTDETLEV…ICDNVTMYWI (94 aa). N94 carries N-linked (GlcNAc...) asparagine glycosylation. An intrachain disulfide couples C120 to C178. N-linked (GlcNAc...) asparagine glycosylation occurs at N180. S239 carries the phosphoserine modification.

This sequence belongs to the chondromodulin-1 family. As to expression, widely expressed with highest expression in tendons and ligaments, in the diaphragm, eye and skeletal muscle. Expressed in neuronal cells of all brain regions. Very low expression, if any, in glial cells.

The protein resides in the membrane. Its subcellular location is the nucleus envelope. Its function is as follows. May be an angiogenesis inhibitor. The protein is Tenomodulin (Tnmd) of Mus musculus (Mouse).